We begin with the raw amino-acid sequence, 144 residues long: MKPRHKRALMIVAALAVIGIAALLILNALNSNIALYVTPSDVVAGKAPQGQAFRIGGLVKEGSLKRDGLTVHFVITDLVKDIPVSYTGILPDLFKEGKGAVIQGNLNPQGEFIASEVLAKHDENYMPPEAKHALEQAQKNGSAK.

The Cytoplasmic segment spans residues 1–7 (MKPRHKR). A helical; Signal-anchor for type II membrane protein membrane pass occupies residues 8 to 28 (ALMIVAALAVIGIAALLILNA). Over 29–144 (LNSNIALYVT…EQAQKNGSAK (116 aa)) the chain is Extracellular. Residues His121 and Tyr125 each coordinate heme.

This sequence belongs to the CcmE/CycJ family.

It is found in the cell membrane. In terms of biological role, heme chaperone required for the biogenesis of c-type cytochromes. Transiently binds heme delivered by CcmC and transfers the heme to apo-cytochromes in a process facilitated by CcmF and CcmH. The sequence is that of Cytochrome c-type biogenesis protein CcmE from Polynucleobacter asymbioticus (strain DSM 18221 / CIP 109841 / QLW-P1DMWA-1) (Polynucleobacter necessarius subsp. asymbioticus).